The primary structure comprises 221 residues: Adenylate kinase (221 aa).

10 to 15 (GAGKGT) lines the ATP pocket. The NMP stretch occupies residues 30–59 (STGDMLRAAVKAGTPLGLEAKRFMDAGELV). AMP-binding positions include threonine 31, arginine 36, 57–59 (ELV), 85–88 (GFPR), and glutamine 92. The LID stretch occupies residues 122 to 159 (GRRSHAASGRTYHVKFNPPKVEGVDDMTGEPLIQRDDD). ATP-binding positions include arginine 123 and 132 to 133 (TY). AMP contacts are provided by arginine 156 and arginine 167. Glycine 207 is an ATP binding site.

The protein belongs to the adenylate kinase family. In terms of assembly, monomer.

It localises to the cytoplasm. It carries out the reaction AMP + ATP = 2 ADP. It functions in the pathway purine metabolism; AMP biosynthesis via salvage pathway; AMP from ADP: step 1/1. Its function is as follows. Catalyzes the reversible transfer of the terminal phosphate group between ATP and AMP. Plays an important role in cellular energy homeostasis and in adenine nucleotide metabolism. The chain is Adenylate kinase from Paraburkholderia phytofirmans (strain DSM 17436 / LMG 22146 / PsJN) (Burkholderia phytofirmans).